The following is a 461-amino-acid chain: Cysteine--tRNA ligase (461 aa).

C28 is a Zn(2+) binding site. A 'HIGH' region motif is present at residues 30–40 (ITVYDLCHIGH). Residues C209, H234, and E238 each coordinate Zn(2+). Residues 266–270 (KMSKS) carry the 'KMSKS' region motif. K269 contributes to the ATP binding site.

It belongs to the class-I aminoacyl-tRNA synthetase family. Monomer. Zn(2+) serves as cofactor.

It is found in the cytoplasm. It catalyses the reaction tRNA(Cys) + L-cysteine + ATP = L-cysteinyl-tRNA(Cys) + AMP + diphosphate. This is Cysteine--tRNA ligase from Escherichia fergusonii (strain ATCC 35469 / DSM 13698 / CCUG 18766 / IAM 14443 / JCM 21226 / LMG 7866 / NBRC 102419 / NCTC 12128 / CDC 0568-73).